The following is a 194-amino-acid chain: ATP-dependent Clp protease proteolytic subunit 4 (194 aa).

Residue Ser100 is the Nucleophile of the active site. The active site involves His125.

Belongs to the peptidase S14 family. As to quaternary structure, fourteen ClpP subunits assemble into 2 heptameric rings which stack back to back to give a disk-like structure with a central cavity, resembling the structure of eukaryotic proteasomes.

The protein resides in the cytoplasm. The enzyme catalyses Hydrolysis of proteins to small peptides in the presence of ATP and magnesium. alpha-casein is the usual test substrate. In the absence of ATP, only oligopeptides shorter than five residues are hydrolyzed (such as succinyl-Leu-Tyr-|-NHMec, and Leu-Tyr-Leu-|-Tyr-Trp, in which cleavage of the -Tyr-|-Leu- and -Tyr-|-Trp bonds also occurs).. In terms of biological role, cleaves peptides in various proteins in a process that requires ATP hydrolysis. Has a chymotrypsin-like activity. Plays a major role in the degradation of misfolded proteins. The protein is ATP-dependent Clp protease proteolytic subunit 4 of Rhodococcus jostii (strain RHA1).